Consider the following 223-residue polypeptide: uncharacterized protein (223 aa).

It is found in the plastid. The protein resides in the chloroplast. This is an uncharacterized protein from Mesostigma viride (Green alga).